The primary structure comprises 430 residues: Probable folylpolyglutamate synthase (430 aa).

37–40 (GKET) contributes to the ATP binding site. Glutamate 132 lines the Mg(2+) pocket. Aspartate 300 provides a ligand contact to ATP.

It belongs to the folylpolyglutamate synthase family.

It is found in the mitochondrion. It catalyses the reaction (6S)-5,6,7,8-tetrahydrofolyl-(gamma-L-Glu)(n) + L-glutamate + ATP = (6S)-5,6,7,8-tetrahydrofolyl-(gamma-L-Glu)(n+1) + ADP + phosphate + H(+). The protein operates within cofactor biosynthesis; tetrahydrofolylpolyglutamate biosynthesis. In terms of biological role, conversion of folates to polyglutamate derivatives. The sequence is that of Probable folylpolyglutamate synthase (RMA1) from Saccharomyces cerevisiae (strain ATCC 204508 / S288c) (Baker's yeast).